A 261-amino-acid polypeptide reads, in one-letter code: MFRNILNTIGAFFSKKKESYFALYRMLGFPPKNFSIYEKALLHKSSSKRDENGCYQNNERLEFLGDAIFNAIIAVILYKKFPTNDEGFLTNTRSKIVKRDTLDKIAYQLGINHLIMISAKVKNHKHIMGNTLEAFIGAIYLDKGYLKTKEFVEKRIINPYIDIDTLVREEVNFKSKLFEWCQKHKILLQFQTLENFTDNNRNVVFQIQALLNNHIAGIGIGYSKRESQQHASQMTWRKIRTDKIFLREVFAGVKKTNSEDK.

The RNase III domain maps to Tyr-20–Gly-144. Glu-62 is a Mg(2+) binding site. Asp-66 is an active-site residue. Residues Asn-130 and Glu-133 each coordinate Mg(2+). Glu-133 is a catalytic residue. Residues Asn-172–Thr-241 enclose the DRBM domain.

The protein belongs to the ribonuclease III family. Homodimer. It depends on Mg(2+) as a cofactor.

The protein resides in the cytoplasm. The catalysed reaction is Endonucleolytic cleavage to 5'-phosphomonoester.. Its function is as follows. Digests double-stranded RNA. Involved in the processing of primary rRNA transcript to yield the immediate precursors to the large and small rRNAs (23S and 16S). Processes some mRNAs, and tRNAs when they are encoded in the rRNA operon. Processes pre-crRNA and tracrRNA of type II CRISPR loci if present in the organism. This chain is Ribonuclease 3, found in Azobacteroides pseudotrichonymphae genomovar. CFP2.